The primary structure comprises 1103 residues: Isoleucine--tRNA ligase (1103 aa).

Positions 1 to 25 are disordered; it reads MSENVYPKANEGGETAHVAPNPSFP. The 'HIGH' region motif lies at 65–75; the sequence is PFANGLPHYGH. The 'KMSKS' region signature appears at 649–653; it reads KMSKH. Lys652 provides a ligand contact to ATP.

The protein belongs to the class-I aminoacyl-tRNA synthetase family. IleS type 2 subfamily. Monomer. It depends on Zn(2+) as a cofactor.

It is found in the cytoplasm. The enzyme catalyses tRNA(Ile) + L-isoleucine + ATP = L-isoleucyl-tRNA(Ile) + AMP + diphosphate. Its function is as follows. Catalyzes the attachment of isoleucine to tRNA(Ile). As IleRS can inadvertently accommodate and process structurally similar amino acids such as valine, to avoid such errors it has two additional distinct tRNA(Ile)-dependent editing activities. One activity is designated as 'pretransfer' editing and involves the hydrolysis of activated Val-AMP. The other activity is designated 'posttransfer' editing and involves deacylation of mischarged Val-tRNA(Ile). This chain is Isoleucine--tRNA ligase, found in Bifidobacterium longum (strain NCC 2705).